Consider the following 142-residue polypeptide: MRHKIKGRKLNVTSSHRKAMLANMAVSLVTHEQIKTTLPKAKELRPYIEVLVTKAKDNNLAARRNILSKIKDKKAIEKLIDVLGVRYKDRPGGYTRIVKAGFRYGDLAPIAYIEFVDRDINAKGNIPQDNSKEDIKSNKGTK.

This sequence belongs to the bacterial ribosomal protein bL17 family. As to quaternary structure, part of the 50S ribosomal subunit. Contacts protein L32.

The protein is Large ribosomal subunit protein bL17 of Rickettsia bellii (strain OSU 85-389).